The following is a 419-amino-acid chain: Heparan-sulfate 6-O-sulfotransferase 3-B (419 aa).

Topologically, residues 1-7 are cytoplasmic; sequence MNDKPNK. A helical; Signal-anchor for type II membrane protein transmembrane segment spans residues 8-28; it reads WIFIPILAILFVMIGYQYVCP. Topologically, residues 29–419 are lumenal; the sequence is AGGQACHFRT…EDYASQVVRW (391 aa). An N-linked (GlcNAc...) asparagine glycan is attached at Asn77. Residue 101–109 coordinates 3'-phosphoadenylyl sulfate; sequence HIQKTGGTT. Substrate is bound by residues 131-132, Arg148, Trp153, and His158; that span reads KK. Residue His158 is the Proton acceptor of the active site. 3'-phosphoadenylyl sulfate-binding residues include Arg191 and Ser199. Substrate-binding residues include His203 and Trp210. 2 N-linked (GlcNAc...) asparagine glycosylation sites follow: Asn270 and Asn275. 323-325 contributes to the 3'-phosphoadenylyl sulfate binding site; it reads TQI. N-linked (GlcNAc...) asparagine glycosylation is present at Asn326. 329-330 contacts 3'-phosphoadenylyl sulfate; it reads RA. Residues Asn393 and Asn402 are each glycosylated (N-linked (GlcNAc...) asparagine).

This sequence belongs to the sulfotransferase 6 family. As to expression, in early somitogenesis, expressed in presumptive forebrain and midbrain, tail bud and Kupffer's vesicle. During mid-somitogenesis, ubiquitous expression which is strongest in the somites and eye. During late somitogenesis, predominantly expressed in eye, hindbrain and ventral somites. At 24 hours post-fertilization (hpf), restricted to lens and neural retina, brain, otic vesicle and somites. At 36 hpf, brain expression is restricted to telencephalon. At 48 hpf, restricted to telencephalon and pectoral fin.

It localises to the membrane. The enzyme catalyses alpha-D-glucosaminyl-[heparan sulfate](n) + 3'-phosphoadenylyl sulfate = 6-sulfo-alpha-D-glucosaminyl-[heparan sulfate](n) + adenosine 3',5'-bisphosphate + H(+). Functionally, 6-O-sulfation enzyme which catalyzes the transfer of sulfate from 3'-phosphoadenosine 5'-phosphosulfate (PAPS) to position 6 of the N-sulfoglucosamine residue (GlcNS) of heparan sulfate. In Danio rerio (Zebrafish), this protein is Heparan-sulfate 6-O-sulfotransferase 3-B.